Here is an 86-residue protein sequence, read N- to C-terminus: Weak toxin 1 (86 aa).

Positions 1–23 (MKTLLLTLVVVAIVCLDLGYTLT) are cleaved as a signal peptide. 5 disulfide bridges follow: Cys-24–Cys-45, Cys-27–Cys-32, Cys-38–Cys-63, Cys-67–Cys-78, and Cys-79–Cys-84.

This sequence belongs to the three-finger toxin family. Ancestral subfamily. Orphan group II sub-subfamily. Expressed by the venom gland.

It localises to the secreted. Functionally, binds with low affinity to muscular (alpha-1-beta-1-delta-epsilon/CHRNA1-CHRNB1-CHRND-CHRNE) and very low affinity to neuronal (alpha-7/CHRNA7) nicotinic acetylcholine receptor (nAChR). This chain is Weak toxin 1, found in Bungarus candidus (Malayan krait).